A 332-amino-acid chain; its full sequence is Arabinogalactan endo-beta-1,4-galactanase (332 aa).

A glycan (N-linked (GlcNAc...) asparagine) is linked at N111. E135 acts as the Proton donor in catalysis. The Nucleophile role is filled by E245.

It belongs to the glycosyl hydrolase 53 family.

It carries out the reaction The enzyme specifically hydrolyzes (1-&gt;4)-beta-D-galactosidic linkages in type I arabinogalactans.. In Humicola insolens (Soft-rot fungus), this protein is Arabinogalactan endo-beta-1,4-galactanase.